A 256-amino-acid polypeptide reads, in one-letter code: Type III pantothenate kinase (256 aa).

Residue 6–13 (DVGNTNIV) coordinates ATP. Position 107–110 (107–110 (GADR)) interacts with substrate. Asp-109 (proton acceptor) is an active-site residue. Asp-129 is a binding site for K(+). Thr-132 serves as a coordination point for ATP. Thr-184 lines the substrate pocket.

The protein belongs to the type III pantothenate kinase family. Homodimer. The cofactor is NH4(+). It depends on K(+) as a cofactor.

It is found in the cytoplasm. It catalyses the reaction (R)-pantothenate + ATP = (R)-4'-phosphopantothenate + ADP + H(+). Its pathway is cofactor biosynthesis; coenzyme A biosynthesis; CoA from (R)-pantothenate: step 1/5. Its function is as follows. Catalyzes the phosphorylation of pantothenate (Pan), the first step in CoA biosynthesis. In Pelotomaculum thermopropionicum (strain DSM 13744 / JCM 10971 / SI), this protein is Type III pantothenate kinase.